The following is a 546-amino-acid chain: 2-isopropylmalate synthase (546 aa).

The Pyruvate carboxyltransferase domain occupies 8–271; it reads ILIFDTTLRD…NSFFGRSSDS (264 aa). 4 residues coordinate Mn(2+): D17, H208, H210, and N244. Positions 408–546 are regulatory domain; sequence QLSHVQVSCG…EKKVFSNPKN (139 aa).

This sequence belongs to the alpha-IPM synthase/homocitrate synthase family. LeuA type 1 subfamily. As to quaternary structure, homodimer. Mn(2+) is required as a cofactor.

Its subcellular location is the cytoplasm. The catalysed reaction is 3-methyl-2-oxobutanoate + acetyl-CoA + H2O = (2S)-2-isopropylmalate + CoA + H(+). It functions in the pathway amino-acid biosynthesis; L-leucine biosynthesis; L-leucine from 3-methyl-2-oxobutanoate: step 1/4. Functionally, catalyzes the condensation of the acetyl group of acetyl-CoA with 3-methyl-2-oxobutanoate (2-ketoisovalerate) to form 3-carboxy-3-hydroxy-4-methylpentanoate (2-isopropylmalate). In Prochlorococcus marinus (strain MIT 9515), this protein is 2-isopropylmalate synthase.